We begin with the raw amino-acid sequence, 447 residues long: Argininosuccinate synthase (447 aa).

Residues 12 to 20 and alanine 39 each bind ATP; that span reads AYSGGLDTS. L-citrulline is bound by residues tyrosine 92 and serine 97. ATP is bound at residue glycine 122. Residues threonine 124, asparagine 128, and aspartate 129 each contribute to the L-aspartate site. Asparagine 128 serves as a coordination point for L-citrulline. Residues arginine 132, serine 182, serine 191, glutamate 267, and tyrosine 279 each coordinate L-citrulline.

This sequence belongs to the argininosuccinate synthase family. Type 1 subfamily. Homotetramer.

It is found in the cytoplasm. The enzyme catalyses L-citrulline + L-aspartate + ATP = 2-(N(omega)-L-arginino)succinate + AMP + diphosphate + H(+). It participates in amino-acid biosynthesis; L-arginine biosynthesis; L-arginine from L-ornithine and carbamoyl phosphate: step 2/3. In Sulfurovum sp. (strain NBC37-1), this protein is Argininosuccinate synthase.